The primary structure comprises 322 residues: Ferredoxin--NADP reductase (322 aa).

Positions 12, 31, 39, 44, 86, 119, and 317 each coordinate FAD.

The protein belongs to the ferredoxin--NADP reductase type 2 family. As to quaternary structure, homodimer. Requires FAD as cofactor.

It catalyses the reaction 2 reduced [2Fe-2S]-[ferredoxin] + NADP(+) + H(+) = 2 oxidized [2Fe-2S]-[ferredoxin] + NADPH. The sequence is that of Ferredoxin--NADP reductase from Acholeplasma laidlawii (strain PG-8A).